The primary structure comprises 478 residues: Cysteine--tRNA ligase (478 aa).

C29 serves as a coordination point for Zn(2+). The short motif at 31 to 41 (PTVYDIPHIGN) is the 'HIGH' region element. Zn(2+) is bound by residues C216, H241, and E245. Residues 274 to 278 (KMSKS) carry the 'KMSKS' region motif. Position 277 (K277) interacts with ATP.

The protein belongs to the class-I aminoacyl-tRNA synthetase family. Monomer. Requires Zn(2+) as cofactor.

The protein resides in the cytoplasm. The catalysed reaction is tRNA(Cys) + L-cysteine + ATP = L-cysteinyl-tRNA(Cys) + AMP + diphosphate. This is Cysteine--tRNA ligase from Orientia tsutsugamushi (strain Ikeda) (Rickettsia tsutsugamushi).